The sequence spans 121 residues: uncharacterized protein (121 aa).

Disordered stretches follow at residues 38–76 (NQMA…KYQQ) and 91–121 (SVLR…KQEN). The span at 43–63 (KRNKQSKKPKQTSKGVKKSSK) shows a compositional bias: basic residues. Low complexity predominate over residues 64-76 (QNKNSSKNNKYQQ).

This is an uncharacterized protein from Schizosaccharomyces pombe (strain 972 / ATCC 24843) (Fission yeast).